Here is a 2971-residue protein sequence, read N- to C-terminus: uncharacterized protein (2971 aa).

Residues 929 to 964 form a disordered region; the sequence is SANFSNGPEESSLSTRLHIQKKRKAKKQRLETRRQK. Positions 936–945 are enriched in polar residues; that stretch reads PEESSLSTRL. A compositionally biased stretch (basic residues) spans 946-955; the sequence is HIQKKRKAKK.

It is found in the plastid. The protein resides in the chloroplast. This is an uncharacterized protein from Chlamydomonas reinhardtii (Chlamydomonas smithii).